A 93-amino-acid polypeptide reads, in one-letter code: DNA-directed RNA polymerase subunit Rpo11 (93 aa).

Belongs to the archaeal Rpo11/eukaryotic RPB11/RPC19 RNA polymerase subunit family. In terms of assembly, part of the RNA polymerase complex.

It is found in the cytoplasm. The enzyme catalyses RNA(n) + a ribonucleoside 5'-triphosphate = RNA(n+1) + diphosphate. Functionally, DNA-dependent RNA polymerase (RNAP) catalyzes the transcription of DNA into RNA using the four ribonucleoside triphosphates as substrates. This is DNA-directed RNA polymerase subunit Rpo11 from Methanocella arvoryzae (strain DSM 22066 / NBRC 105507 / MRE50).